Reading from the N-terminus, the 119-residue chain is Ribonuclease P protein component (119 aa).

Belongs to the RnpA family. As to quaternary structure, consists of a catalytic RNA component (M1 or rnpB) and a protein subunit.

It carries out the reaction Endonucleolytic cleavage of RNA, removing 5'-extranucleotides from tRNA precursor.. Its function is as follows. RNaseP catalyzes the removal of the 5'-leader sequence from pre-tRNA to produce the mature 5'-terminus. It can also cleave other RNA substrates such as 4.5S RNA. The protein component plays an auxiliary but essential role in vivo by binding to the 5'-leader sequence and broadening the substrate specificity of the ribozyme. This Beutenbergia cavernae (strain ATCC BAA-8 / DSM 12333 / CCUG 43141 / JCM 11478 / NBRC 16432 / NCIMB 13614 / HKI 0122) protein is Ribonuclease P protein component.